Consider the following 344-residue polypeptide: uncharacterized protein (344 aa).

The HTH araC/xylS-type domain occupies 242 to 343 (RGITALVRSK…GVAPSEYSRR (102 aa)). 2 consecutive DNA-binding regions (H-T-H motif) follow at residues 263–284 (TDVA…AEEG) and 310–333 (VQQV…KRWY).

This is an uncharacterized protein from Mycobacterium bovis (strain ATCC BAA-935 / AF2122/97).